Reading from the N-terminus, the 294-residue chain is 33 kDa chaperonin (294 aa).

2 disulfide bridges follow: cysteine 236–cysteine 238 and cysteine 269–cysteine 272.

This sequence belongs to the HSP33 family. Post-translationally, under oxidizing conditions two disulfide bonds are formed involving the reactive cysteines. Under reducing conditions zinc is bound to the reactive cysteines and the protein is inactive.

Its subcellular location is the cytoplasm. Redox regulated molecular chaperone. Protects both thermally unfolding and oxidatively damaged proteins from irreversible aggregation. Plays an important role in the bacterial defense system toward oxidative stress. The sequence is that of 33 kDa chaperonin from Desulfotalea psychrophila (strain LSv54 / DSM 12343).